Reading from the N-terminus, the 281-residue chain is F-actin-capping protein subunit alpha (281 aa).

It belongs to the F-actin-capping protein alpha subunit family. Component of the F-actin capping complex, composed of a heterodimer of an alpha and a beta subunit.

The protein resides in the cytoplasm. It localises to the cytoskeleton. F-actin-capping proteins bind in a Ca(2+)-independent manner to the fast growing ends of actin filaments (barbed end) thereby blocking the exchange of subunits at these ends. Unlike other capping proteins (such as gelsolin and severin), these proteins do not sever actin filaments. The polypeptide is F-actin-capping protein subunit alpha (acpB) (Dictyostelium discoideum (Social amoeba)).